We begin with the raw amino-acid sequence, 200 residues long: Recombination protein RecR (200 aa).

The C4-type zinc finger occupies 59-74; sequence CDICGNVCESSPCPVC. Residues 82-177 enclose the Toprim domain; that stretch reads SVICVVEEPK…KVTRLASGLP (96 aa).

This sequence belongs to the RecR family.

Functionally, may play a role in DNA repair. It seems to be involved in an RecBC-independent recombinational process of DNA repair. It may act with RecF and RecO. This is Recombination protein RecR from Bifidobacterium longum subsp. infantis (strain ATCC 15697 / DSM 20088 / JCM 1222 / NCTC 11817 / S12).